The chain runs to 111 residues: Large ribosomal subunit protein uL22 (111 aa).

It belongs to the universal ribosomal protein uL22 family. In terms of assembly, part of the 50S ribosomal subunit.

Functionally, this protein binds specifically to 23S rRNA; its binding is stimulated by other ribosomal proteins, e.g. L4, L17, and L20. It is important during the early stages of 50S assembly. It makes multiple contacts with different domains of the 23S rRNA in the assembled 50S subunit and ribosome. Its function is as follows. The globular domain of the protein is located near the polypeptide exit tunnel on the outside of the subunit, while an extended beta-hairpin is found that lines the wall of the exit tunnel in the center of the 70S ribosome. This chain is Large ribosomal subunit protein uL22, found in Chlamydia caviae (strain ATCC VR-813 / DSM 19441 / 03DC25 / GPIC) (Chlamydophila caviae).